A 528-amino-acid polypeptide reads, in one-letter code: Tyrosine--tRNA ligase, cytoplasmic (528 aa).

An L-tyrosine-binding site is contributed by Tyr-39. The 'HIGH' region signature appears at 44–52 (TTGKPHVAY). Residues Tyr-166, Gln-170, Asp-173, and Gln-188 each contribute to the L-tyrosine site. Residues 222–226 (KMSSS) carry the 'KMSKS' region motif. Positions 242-247 (KKKLKK) match the Nuclear localization signal motif. The disordered stretch occupies residues 332–362 (EMKKLSNDAYPDASKQKSVPKGSTKNSGTEE). Residues 364-468 (DPSLLDLRVG…SGSAPGERIY (105 aa)) enclose the tRNA-binding domain.

Belongs to the class-I aminoacyl-tRNA synthetase family. In terms of assembly, homodimer.

It localises to the cytoplasm. The protein localises to the nucleus. It carries out the reaction tRNA(Tyr) + L-tyrosine + ATP = L-tyrosyl-tRNA(Tyr) + AMP + diphosphate + H(+). Its function is as follows. Catalyzes the attachment of tyrosine to tRNA(Tyr) in a two-step reaction: tyrosine is first activated by ATP to form Tyr-AMP and then transferred to the acceptor end of tRNA(Tyr). The polypeptide is Tyrosine--tRNA ligase, cytoplasmic (yars1) (Xenopus laevis (African clawed frog)).